The chain runs to 469 residues: 3-isopropylmalate dehydratase large subunit (469 aa).

[4Fe-4S] cluster-binding residues include C348, C409, and C412.

Belongs to the aconitase/IPM isomerase family. LeuC type 1 subfamily. In terms of assembly, heterodimer of LeuC and LeuD. [4Fe-4S] cluster serves as cofactor.

It catalyses the reaction (2R,3S)-3-isopropylmalate = (2S)-2-isopropylmalate. The protein operates within amino-acid biosynthesis; L-leucine biosynthesis; L-leucine from 3-methyl-2-oxobutanoate: step 2/4. Functionally, catalyzes the isomerization between 2-isopropylmalate and 3-isopropylmalate, via the formation of 2-isopropylmaleate. The chain is 3-isopropylmalate dehydratase large subunit from Nitrosococcus oceani (strain ATCC 19707 / BCRC 17464 / JCM 30415 / NCIMB 11848 / C-107).